A 608-amino-acid chain; its full sequence is ATM1-type heavy metal exporter (608 aa).

The Cytoplasmic portion of the chain corresponds to 1–38 (MPPETATNPKDARHDGWQTLKRFLPYLWPADNAVLRRR). The helical transmembrane segment at 39-60 (VVGAILMVLLGKATTLALPFAY) threads the bilayer. Positions 39 to 327 (VVGAILMVLL…LGMVYRTIRQ (289 aa)) constitute an ABC transmembrane type-1 domain. The Periplasmic segment spans residues 61–82 (KKAVDAMTLGGGAQPALTVALA). The chain crosses the membrane as a helical span at residues 83–105 (FVLAYALGRFSGVLFDNLRNIVF). Residues 106–154 (ERVGQDATRHLAENVFARLHKLSLRFHLARRTGEVTKVIERGTKSIDTM) lie on the Cytoplasmic side of the membrane. Residues 155-178 (LYFLLFNIAPTVIELTAVIVIFWL) traverse the membrane as a helical segment. Residue asparagine 179 is a topological domain, periplasmic. Residues 180–202 (FGLGLVTATILAVIAYVWTTRTI) traverse the membrane as a helical segment. At 203–266 (TEWRTHLREK…AAVKSENSLG (64 aa)) the chain is on the cytoplasmic side. Residues 206–210 (RTHLR) and 269–272 (NIAQ) contribute to the glutathione site. Residues 267–285 (LLNIAQALIVNLLMAGAMA) form a helical membrane-spanning segment. Residues 286–300 (WTVYGWSQGKLTVGD) lie on the Periplasmic side of the membrane. The chain crosses the membrane as a helical span at residues 301-322 (LVFVNTYLTQLFRPLDMLGMVY). Position 316 to 319 (316 to 319 (DMLG)) interacts with glutathione. The Cytoplasmic portion of the chain corresponds to 323–608 (RTIRQGLIDM…ESAEVSEAAE (286 aa)). One can recognise an ABC transporter domain in the interval 361 to 595 (VTFDNVVFGY…DGLYAEMWAR (235 aa)). Residues tyrosine 370 and 394-405 (GPSGAGKSTIAR) contribute to the ATP site.

Belongs to the ABC transporter superfamily. ABCB family. Heavy Metal importer (TC 3.A.1.210) subfamily. In terms of assembly, homodimer.

The protein resides in the cell inner membrane. Its function is as follows. Mediates the ATP-dependent export of glutathione-conjugated substrates, such as heavy metal-glutathione conjugates. ATP hydrolysis is stimulated by glutathione binding. Protects cells against toxic heavy metal ions, such as silver and mercury ions. May also mediate the transport of glutathione-conjugated aromatic hydrocarbons, such as dinitrobenzene. In Novosphingobium aromaticivorans (strain ATCC 700278 / DSM 12444 / CCUG 56034 / CIP 105152 / NBRC 16084 / F199), this protein is ATM1-type heavy metal exporter (atm1).